The following is a 438-amino-acid chain: GTPase Der (438 aa).

EngA-type G domains lie at Pro-4–Asn-168 and Ile-177–Cys-352. GTP-binding positions include Gly-10–Ser-17, Asp-57–Ile-61, Asn-120–Asp-123, Gly-183–Ser-190, Asp-230–Leu-234, and Asn-295–Asp-298. The region spanning Lys-353–Lys-437 is the KH-like domain.

The protein belongs to the TRAFAC class TrmE-Era-EngA-EngB-Septin-like GTPase superfamily. EngA (Der) GTPase family. In terms of assembly, associates with the 50S ribosomal subunit.

In terms of biological role, GTPase that plays an essential role in the late steps of ribosome biogenesis. This Clostridium novyi (strain NT) protein is GTPase Der.